We begin with the raw amino-acid sequence, 314 residues long: Homoserine O-acetyltransferase (314 aa).

The Acyl-thioester intermediate role is filled by C142. Substrate-binding residues include K163 and S192. The Proton acceptor role is filled by H235. Residue E237 is part of the active site. Position 249 (R249) interacts with substrate.

The protein belongs to the MetA family.

It localises to the cytoplasm. It carries out the reaction L-homoserine + acetyl-CoA = O-acetyl-L-homoserine + CoA. It functions in the pathway amino-acid biosynthesis; L-methionine biosynthesis via de novo pathway; O-acetyl-L-homoserine from L-homoserine: step 1/1. In terms of biological role, transfers an acetyl group from acetyl-CoA to L-homoserine, forming acetyl-L-homoserine. In Streptococcus pneumoniae serotype 19F (strain G54), this protein is Homoserine O-acetyltransferase.